A 192-amino-acid polypeptide reads, in one-letter code: E3 ubiquitin-protein ligase RNF185 (192 aa).

The span at 1–14 (MASKGPSASASTEN) shows a compositional bias: polar residues. A disordered region spans residues 1–30 (MASKGPSASASTENSSAGGPSGSSNGTGES). Residues 1–130 (MASKGPSASA…GGFQGFGFGD (130 aa)) lie on the Cytoplasmic side of the membrane. Over residues 15-27 (SSAGGPSGSSNGT) the composition is skewed to low complexity. The tract at residues 29–80 (ESGGQDSTFECNICLDTAKDAVISLCGHLFCWPCLHQWLETRPNRQVCPVCK) is required for ubiquitin ligase activity and protection against ER stress-induced cell death. The RING-type zinc-finger motif lies at 39–80 (CNICLDTAKDAVISLCGHLFCWPCLHQWLETRPNRQVCPVCK). The segment at 90–123 (PLYGRGSTGQQDPREKTPPRPQGQRPEPENRGGF) is disordered. Residues 131 to 151 (GGFQMSFGIGAFPFGIFATAF) traverse the membrane as a helical segment. Residues 152–171 (NINDGRPPPAVPGTPQYVDE) are Mitochondrial intermembrane-facing. The helical transmembrane segment at 172-192 (QFLSRLFLFVALVIMFWLLIA) threads the bilayer.

In terms of assembly, interacts with ATG5 and BNIP1.

It is found in the mitochondrion outer membrane. The protein localises to the endoplasmic reticulum membrane. It catalyses the reaction S-ubiquitinyl-[E2 ubiquitin-conjugating enzyme]-L-cysteine + [acceptor protein]-L-lysine = [E2 ubiquitin-conjugating enzyme]-L-cysteine + N(6)-ubiquitinyl-[acceptor protein]-L-lysine.. It participates in protein modification; protein ubiquitination. Its function is as follows. E3 ubiquitin-protein ligase that regulates selective mitochondrial autophagy by mediating 'Lys-63'-linked polyubiquitination of BNIP1. Acts in the endoplasmic reticulum (ER)-associated degradation (ERAD) pathway, which targets misfolded proteins that accumulate in the endoplasmic reticulum (ER) for ubiquitination and subsequent proteasome-mediated degradation. Protects cells from ER stress-induced apoptosis. Responsible for the cotranslational ubiquitination and degradation of CFTR in the ERAD pathway. Also acts as a regulator of the innate antiviral response by catalyzing 'Lys-27'-linked polyubiquitination of CGAS, thereby promoting CGAS cyclic GMP-AMP synthase activity. Preferentially associates with the E2 enzymes UBE2J1 and UBE2J2. The polypeptide is E3 ubiquitin-protein ligase RNF185 (Rnf185) (Rattus norvegicus (Rat)).